Here is a 59-residue protein sequence, read N- to C-terminus: DNA gyrase inhibitor YacG (59 aa).

Zn(2+) is bound by residues Cys9, Cys12, Cys27, and Cys31.

The protein belongs to the DNA gyrase inhibitor YacG family. As to quaternary structure, interacts with GyrB. The cofactor is Zn(2+).

Functionally, inhibits all the catalytic activities of DNA gyrase by preventing its interaction with DNA. Acts by binding directly to the C-terminal domain of GyrB, which probably disrupts DNA binding by the gyrase. In Geotalea daltonii (strain DSM 22248 / JCM 15807 / FRC-32) (Geobacter daltonii), this protein is DNA gyrase inhibitor YacG.